Reading from the N-terminus, the 70-residue chain is Putative microRNA 17 host gene protein (70 aa).

The Cytoplasmic portion of the chain corresponds to 1-20 (MFCHVDVKISSKRYTWTKLP). Residues 21–43 (LNVPKLVLIYLQSHFVLFFFSMC) form a helical membrane-spanning segment. Over 44–70 (QSIWERPAIGRATTSSASWMVGYDCLL) the chain is Extracellular.

As to expression, highly expressed in B-cell lymphoma and lung cancer.

The protein resides in the membrane. The sequence is that of Putative microRNA 17 host gene protein (MIR17HG) from Homo sapiens (Human).